The following is a 750-amino-acid chain: Eukaryotic translation initiation factor 3 subunit B (750 aa).

Residues 42–128 enclose the RRM domain; the sequence is TFVVVDGLPE…HTLRVNKMTD (87 aa). WD repeat units lie at residues 195–234, 236–292, 309–348, and 519–562; these read DRQQ…RLRR, PHPF…PLRS, SAKF…LMDK, and LDKK…EKPE.

This sequence belongs to the eIF-3 subunit B family. In terms of assembly, component of the eukaryotic translation initiation factor 3 (eIF-3) complex.

It localises to the cytoplasm. Functionally, RNA-binding component of the eukaryotic translation initiation factor 3 (eIF-3) complex, which is involved in protein synthesis of a specialized repertoire of mRNAs and, together with other initiation factors, stimulates binding of mRNA and methionyl-tRNAi to the 40S ribosome. The eIF-3 complex specifically targets and initiates translation of a subset of mRNAs involved in cell proliferation. The polypeptide is Eukaryotic translation initiation factor 3 subunit B (Chaetomium globosum (strain ATCC 6205 / CBS 148.51 / DSM 1962 / NBRC 6347 / NRRL 1970) (Soil fungus)).